The following is a 150-amino-acid chain: General odorant-binding protein 19d (150 aa).

Residues 1-23 (MSHLVHLTVLLLVGILCLGATSA) form the signal peptide. Disulfide bonds link Cys-41–Cys-72, Cys-68–Cys-126, and Cys-116–Cys-135.

Belongs to the PBP/GOBP family. Expressed in the antenna, mostly on the anterior surface of the third antennal segment. Also detected in the maxillary palps and in cells at the bases of the taste hairs on the proboscis and internal taste organs of the head.

Its subcellular location is the secreted. This Drosophila melanogaster (Fruit fly) protein is General odorant-binding protein 19d (Obp19d).